The primary structure comprises 267 residues: Tryptophan synthase alpha chain (267 aa).

Catalysis depends on proton acceptor residues Glu43 and Asp54.

Belongs to the TrpA family. In terms of assembly, tetramer of two alpha and two beta chains.

It catalyses the reaction (1S,2R)-1-C-(indol-3-yl)glycerol 3-phosphate + L-serine = D-glyceraldehyde 3-phosphate + L-tryptophan + H2O. The protein operates within amino-acid biosynthesis; L-tryptophan biosynthesis; L-tryptophan from chorismate: step 5/5. The alpha subunit is responsible for the aldol cleavage of indoleglycerol phosphate to indole and glyceraldehyde 3-phosphate. This Bacillus subtilis subsp. natto protein is Tryptophan synthase alpha chain.